Consider the following 463-residue polypeptide: Rubisco accumulation factor 1, chloroplastic (463 aa).

Over residues 1–18 (MLSLSHPHPHPAASTTAP) the composition is skewed to low complexity. The N-terminal 31 residues, 1-31 (MLSLSHPHPHPAASTTAPRHQRTAPVWHRRR), are a transit peptide targeting the chloroplast. The tract at residues 1-84 (MLSLSHPHPH…PFHPPPSPLP (84 aa)) is disordered. The segment covering 19–33 (RHQRTAPVWHRRRAS) has biased composition (basic residues). Gly residues predominate over residues 43 to 53 (PGGGSTGGRGG). The interval 83–275 (LPPSLRNLDL…SGRARVELEL (193 aa)) is N-terminal alpha-helix. The stretch at 240 to 294 (RQSREAIDVQDRVAELERALQVVETESGRARVELELERARRKAAGEEEVDEEGEE) forms a coiled coil. The tract at residues 305–450 (VTVVRLRYGE…AEVVIVVRPP (146 aa)) is C-terminal beta sheet.

This sequence belongs to the RAF family. Homotrimer. In terms of tissue distribution, expressed in bundle sheath.

The protein localises to the plastid. Its subcellular location is the chloroplast. In terms of biological role, required for assembly or stability of RuBisCO. Acts at a postchaperonin step to fold and/or assemble the large subunit (LS) into RuBisCO. The protein is Rubisco accumulation factor 1, chloroplastic of Zea mays (Maize).